The primary structure comprises 229 residues: Putative N-acetylmannosamine-6-phosphate 2-epimerase (229 aa).

The protein belongs to the NanE family.

It catalyses the reaction an N-acyl-D-glucosamine 6-phosphate = an N-acyl-D-mannosamine 6-phosphate. It functions in the pathway amino-sugar metabolism; N-acetylneuraminate degradation; D-fructose 6-phosphate from N-acetylneuraminate: step 3/5. In terms of biological role, converts N-acetylmannosamine-6-phosphate (ManNAc-6-P) to N-acetylglucosamine-6-phosphate (GlcNAc-6-P). This chain is Putative N-acetylmannosamine-6-phosphate 2-epimerase, found in Pediococcus pentosaceus (strain ATCC 25745 / CCUG 21536 / LMG 10740 / 183-1w).